We begin with the raw amino-acid sequence, 424 residues long: Probable aminotransferase TAT4 (424 aa).

The protein belongs to the class-I pyridoxal-phosphate-dependent aminotransferase family. Pyridoxal 5'-phosphate is required as a cofactor.

In Arabidopsis thaliana (Mouse-ear cress), this protein is Probable aminotransferase TAT4.